We begin with the raw amino-acid sequence, 577 residues long: DEAD-box ATP-dependent RNA helicase 22 (577 aa).

Positions 82-110 match the Q motif motif; that stretch reads TSWESLGVSDRLASALHGAGLARPSLVQA. In terms of domain architecture, Helicase ATP-binding spans 113 to 375; sequence IPHVLTTNDV…GGVLKRMFPN (263 aa). 126–133 provides a ligand contact to ATP; that stretch reads AETGSGKT. Positions 249–252 match the DEAD box motif; it reads DEAD. Positions 288–317 are disordered; that stretch reads SLGDTNEYREDSDSQSAELSADDEENEDGL. Positions 407 to 568 constitute a Helicase C-terminal domain; the sequence is LLDAVKYGLK…SFRNKLKKQA (162 aa).

It belongs to the DEAD box helicase family.

It carries out the reaction ATP + H2O = ADP + phosphate + H(+). The protein is DEAD-box ATP-dependent RNA helicase 22 of Oryza sativa subsp. japonica (Rice).